Reading from the N-terminus, the 417-residue chain is Sulfate adenylyltransferase (417 aa).

Belongs to the sulfate adenylyltransferase family.

It carries out the reaction sulfate + ATP + H(+) = adenosine 5'-phosphosulfate + diphosphate. It functions in the pathway sulfur metabolism; hydrogen sulfide biosynthesis; sulfite from sulfate: step 1/3. The protein is Sulfate adenylyltransferase of Psychrobacter cryohalolentis (strain ATCC BAA-1226 / DSM 17306 / VKM B-2378 / K5).